The sequence spans 87 residues: Small ribosomal subunit protein bS20 (87 aa).

This sequence belongs to the bacterial ribosomal protein bS20 family.

Functionally, binds directly to 16S ribosomal RNA. This is Small ribosomal subunit protein bS20 from Halothermothrix orenii (strain H 168 / OCM 544 / DSM 9562).